Reading from the N-terminus, the 688-residue chain is Transcription factor GTE9 (688 aa).

Residues 1 to 36 (MTERNGGFPGDYCFEAPGGDYDEGSDSPRVSEGSNC) are disordered. Residues 132 to 238 (TAVMLLMKQC…KFFEVRWKTL (107 aa)) enclose the Bromo domain. An NET domain is found at 280-361 (ENVVDPAKRV…EHLREIQNKK (82 aa)). The segment at 423-505 (GNSLGSVSGD…AQNEKQLPPE (83 aa)) is disordered. S478 bears the Phosphoserine mark. A compositionally biased stretch (polar residues) spans 491–500 (QDGNSAQNEK). Residues 505-688 (EKSYRAAILK…EIDIEEGEID (184 aa)) are transcription activation domain. Residues 534–613 (TRDPEKLQRE…QSVELNENAK (80 aa)) are a coiled coil. Residues 660–688 (FMKQDEDEEEADPLTSPAPEIDIEEGEID) form a disordered region.

As to quaternary structure, interacts with BT1.

Its subcellular location is the nucleus. This chain is Transcription factor GTE9 (GTE9), found in Arabidopsis thaliana (Mouse-ear cress).